The sequence spans 234 residues: Probable transcriptional regulatory protein MYCGA1330 (234 aa).

It belongs to the TACO1 family.

It is found in the cytoplasm. The chain is Probable transcriptional regulatory protein MYCGA1330 from Mycoplasmoides gallisepticum (strain R(low / passage 15 / clone 2)) (Mycoplasma gallisepticum).